The chain runs to 489 residues: Ammonium transporter MEP3 (489 aa).

The Extracellular segment spans residues 1-17; it reads MARGDGHLWTETYDSST. Residues 18 to 38 form a helical membrane-spanning segment; the sequence is VAFMILGAALVFFMVPGLGFL. The Cytoplasmic segment spans residues 39–48; it reads YSGLARRKSA. The helical transmembrane segment at 49 to 69 threads the bilayer; the sequence is LALIWVVIMATLVGILQWYFW. Residues 70 to 108 are Extracellular-facing; it reads GYSLAFSKTATNNKFIGNLDSFGFRNVYGKISDDSTYPE. Residues 109 to 129 form a helical membrane-spanning segment; that stretch reads LIYAIFQMMFMCVALSIIAGA. Over 130–139 the chain is Cytoplasmic; that stretch reads TAERGKLFPH. Residues 140 to 160 form a helical membrane-spanning segment; it reads MVFLFVFATLVYCPITYWIWA. The Extracellular segment spans residues 161 to 173; the sequence is PGGWAYQWGVLDW. The chain crosses the membrane as a helical span at residues 174-194; sequence AGGGNIEILSAVAGFVYSYFL. The Cytoplasmic segment spans residues 195–209; that stretch reads GRRKENLLINFRPHN. A helical transmembrane segment spans residues 210–230; sequence VSMVTLGTSILWFGWLLFNAA. The Extracellular portion of the chain corresponds to 231 to 239; sequence SSLSPNMRS. The chain crosses the membrane as a helical span at residues 240-260; the sequence is VYAFMNTCLSATTGGMTWCLL. Residues 261 to 267 are Cytoplasmic-facing; sequence DYRSEKK. A helical membrane pass occupies residues 268-288; the sequence is WSTVGLCSGIICGLVAATPSS. Gly-289 is a topological domain (extracellular). The helical transmembrane segment at 290 to 310 threads the bilayer; sequence CITLYGSLIQGIIAGVVCNFA. At 311–330 the chain is on the cytoplasmic side; the sequence is TKIKYYLKVDDSLDLLAEHG. The helical transmembrane segment at 331 to 351 threads the bilayer; that stretch reads IAGVVGLIFNALFAADWVIGM. The Extracellular portion of the chain corresponds to 352 to 372; it reads DGTTKHKGGWLTHNWKQMYIQ. The chain crosses the membrane as a helical span at residues 373-393; that stretch reads IAYIGASAGYCAVVTAIICFV. Topologically, residues 394-489 are cytoplasmic; sequence LGKIPGVHLR…NPKLHHAKEA (96 aa). Residues 448–481 are compositionally biased toward polar residues; sequence GANSASETNPTEDSQNSSLSSATVSGQNEKSNNP. Positions 448-489 are disordered; it reads GANSASETNPTEDSQNSSLSSATVSGQNEKSNNPKLHHAKEA.

This sequence belongs to the ammonia transporter channel (TC 1.A.11.2) family.

It localises to the membrane. In terms of biological role, transporter for ammonium (both charged and uncharged NH3 and NH4) to use as a nitrogen source. The affinity of MEP2 is about twenty times higher than that of MEP1. MEP3 has the lowest affinity. The polypeptide is Ammonium transporter MEP3 (MEP3) (Saccharomyces cerevisiae (strain ATCC 204508 / S288c) (Baker's yeast)).